Reading from the N-terminus, the 746-residue chain is Long-chain-alcohol oxidase FAO3 (746 aa).

A helical transmembrane segment spans residues 139–159; the sequence is ILTPIRAAFVYIKVAFLFCFF. 233-248 contributes to the FAD binding site; sequence CDVVVVGSGSGGGVAA. H677 functions as the Proton acceptor in the catalytic mechanism.

Belongs to the GMC oxidoreductase family.

Its subcellular location is the membrane. The catalysed reaction is a long-chain primary fatty alcohol + O2 = a long-chain fatty aldehyde + H2O2. In terms of biological role, long-chain fatty alcohol oxidase involved in the omega-oxidation pathway of lipid degradation. This chain is Long-chain-alcohol oxidase FAO3 (FAO3), found in Arabidopsis thaliana (Mouse-ear cress).